A 905-amino-acid polypeptide reads, in one-letter code: DNA mismatch repair protein MutS (905 aa).

A disordered region spans residues 388 to 410 (LERPANPEGTYPTDAETSGDTLP). Residue 638 to 645 (GPNMAGKS) coordinates ATP. The tract at residues 826–847 (RDAARGTNSAPSRQTLPGLDLP) is disordered. Over residues 831–840 (GTNSAPSRQT) the composition is skewed to polar residues.

It belongs to the DNA mismatch repair MutS family.

Functionally, this protein is involved in the repair of mismatches in DNA. It is possible that it carries out the mismatch recognition step. This protein has a weak ATPase activity. This chain is DNA mismatch repair protein MutS, found in Nitratidesulfovibrio vulgaris (strain DP4) (Desulfovibrio vulgaris).